The primary structure comprises 118 residues: Large ribosomal subunit protein bL20 (118 aa).

Belongs to the bacterial ribosomal protein bL20 family.

Functionally, binds directly to 23S ribosomal RNA and is necessary for the in vitro assembly process of the 50S ribosomal subunit. It is not involved in the protein synthesizing functions of that subunit. This Syntrophotalea carbinolica (strain DSM 2380 / NBRC 103641 / GraBd1) (Pelobacter carbinolicus) protein is Large ribosomal subunit protein bL20.